Consider the following 563-residue polypeptide: Tripeptidyl-peptidase 1 (563 aa).

A signal peptide spans 1–19; that stretch reads MGLQACLLGLFALILSGKC. A propeptide spans 20 to 195 (removed in mature form); it reads SYSPEPDQRR…PEPQVTGTVG (176 aa). Cysteine 111 and cysteine 122 form a disulfide bridge. The region spanning 199–563 is the Peptidase S53 domain; the sequence is GVTPSVIRKR…PALLKTLLNP (365 aa). N-linked (GlcNAc...) asparagine glycans are attached at residues asparagine 210 and asparagine 222. Catalysis depends on charge relay system residues glutamate 272 and aspartate 276. Asparagine 286, asparagine 313, and asparagine 443 each carry an N-linked (GlcNAc...) asparagine glycan. 2 disulfide bridges follow: cysteine 365-cysteine 526 and cysteine 522-cysteine 537. Residue serine 475 is the Charge relay system of the active site. The Ca(2+) site is built by aspartate 517 and valine 518. Glycine 539, glycine 541, and aspartate 543 together coordinate Ca(2+).

Monomer. Interacts with CLN5. Interacts with CLN3. The cofactor is Ca(2+). In terms of processing, activated by autocatalytic proteolytical processing upon acidification. N-glycosylation is required for processing and activity.

It is found in the lysosome. The protein resides in the melanosome. It carries out the reaction Release of an N-terminal tripeptide from a polypeptide, but also has endopeptidase activity.. Functionally, lysosomal serine protease with tripeptidyl-peptidase I activity. May act as a non-specific lysosomal peptidase which generates tripeptides from the breakdown products produced by lysosomal proteinases. Requires substrates with an unsubstituted N-terminus. This Macaca fascicularis (Crab-eating macaque) protein is Tripeptidyl-peptidase 1 (TPP1).